Here is a 337-residue protein sequence, read N- to C-terminus: Phosphate acyltransferase (337 aa).

It belongs to the PlsX family. Homodimer. Probably interacts with PlsY.

It is found in the cytoplasm. The enzyme catalyses a fatty acyl-[ACP] + phosphate = an acyl phosphate + holo-[ACP]. The protein operates within lipid metabolism; phospholipid metabolism. Functionally, catalyzes the reversible formation of acyl-phosphate (acyl-PO(4)) from acyl-[acyl-carrier-protein] (acyl-ACP). This enzyme utilizes acyl-ACP as fatty acyl donor, but not acyl-CoA. The polypeptide is Phosphate acyltransferase (Polynucleobacter necessarius subsp. necessarius (strain STIR1)).